Reading from the N-terminus, the 339-residue chain is Alcohol dehydrogenase (339 aa).

Zn(2+) contacts are provided by Cys38, His61, Cys92, Cys95, Cys98, Cys106, and Cys148. NAD(+) contacts are provided by residues 172–177 (GIGGLG), Asp195, Lys200, 260–262 (VGL), and Arg331.

Belongs to the zinc-containing alcohol dehydrogenase family. Zn(2+) serves as cofactor.

The catalysed reaction is a primary alcohol + NAD(+) = an aldehyde + NADH + H(+). It catalyses the reaction a secondary alcohol + NAD(+) = a ketone + NADH + H(+). With respect to regulation, the rate-limiting step is NADH release. Catabolite repression. Functionally, active with primary alcohols, including methanol. In Geobacillus stearothermophilus (Bacillus stearothermophilus), this protein is Alcohol dehydrogenase (adh).